Consider the following 313-residue polypeptide: tRNA (guanine-N(7)-)-methyltransferase (313 aa).

Residues Glu33, Glu58, and Asp85 each contribute to the S-adenosyl-L-methionine site. Residues Lys112, Asp144, and 177–180 (TRYE) each bind substrate.

This sequence belongs to the class I-like SAM-binding methyltransferase superfamily. TrmB family.

The enzyme catalyses guanosine(46) in tRNA + S-adenosyl-L-methionine = N(7)-methylguanosine(46) in tRNA + S-adenosyl-L-homocysteine. The protein operates within tRNA modification; N(7)-methylguanine-tRNA biosynthesis. Functionally, catalyzes the formation of N(7)-methylguanine at position 46 (m7G46) in tRNA. The chain is tRNA (guanine-N(7)-)-methyltransferase from Thermotoga maritima (strain ATCC 43589 / DSM 3109 / JCM 10099 / NBRC 100826 / MSB8).